Reading from the N-terminus, the 314-residue chain is Citrate/oxoglutarate carrier protein (314 aa).

Solcar repeat units lie at residues 18–100, 107–199, and 217–301; these read VSFS…EAEY, LNNF…VEDG, and EKIG…AKEF. 5 helical membrane passes run 23 to 44, 77 to 97, 111 to 127, 178 to 198, and 218 to 238; these read ILLG…LEVV, IPWA…VSAE, ASGI…QAYL, VAIR…LVED, and KIGA…IEVI. A DNA-binding region spans residues 246–259; it reads KEDPNRPKNLTVGK. Residues 273–294 traverse the membrane as a helical segment; it reads LYRGVTPRIGLGIWQTVFMVGF.

The protein belongs to the mitochondrial carrier (TC 2.A.29) family.

The protein localises to the mitochondrion inner membrane. It localises to the mitochondrion matrix. Its subcellular location is the mitochondrion nucleoid. Its activity is regulated as follows. Strongly inhibited by mersalyl, p-chloromercuribenzenesulfonate, mercuric chloride, N-ethylmaleimide, pyridoxal 5'-phosphate, bathophenanthroline, and tannic acid. Partially inhibited by alpha-cyanocinnamate and bromescol purple. Weakly inhibited by butylmalonate and phenylsuccinate. Not inhibited by 1,2,3-benzenetricarboxylate or carboxyatractyloside. Its function is as follows. Mitochondrial antiporter which catalyzes the transport of citrate and oxoglutarate across the membrane. Also shows specificity for oxaloacetate, and to a lesser extent succinate and fumarate. Transports isocitrate, cis-aconitate and L-malate with very low efficiency. Does not show uniporter activity. Helps to maintain normal citrate levels and NADPH/NADP(+) ratios under conditions of oxidative stress. In addition, associates with the mitochondrial nucleoid and binds DNA in vitro, although the relevance of these data in vivo is unclear. The protein is Citrate/oxoglutarate carrier protein (YHM2) of Saccharomyces cerevisiae (strain ATCC 204508 / S288c) (Baker's yeast).